A 205-amino-acid chain; its full sequence is Octanoyltransferase (205 aa).

Positions 30–205 (ERTADEIWLL…QALRARLGYA (176 aa)) constitute a BPL/LPL catalytic domain. Residues 69 to 76 (RGGQVTYH), 136 to 138 (SLG), and 149 to 151 (GLA) each bind substrate. Cysteine 167 acts as the Acyl-thioester intermediate in catalysis.

This sequence belongs to the LipB family.

Its subcellular location is the cytoplasm. It carries out the reaction octanoyl-[ACP] + L-lysyl-[protein] = N(6)-octanoyl-L-lysyl-[protein] + holo-[ACP] + H(+). It functions in the pathway protein modification; protein lipoylation via endogenous pathway; protein N(6)-(lipoyl)lysine from octanoyl-[acyl-carrier-protein]: step 1/2. Its function is as follows. Catalyzes the transfer of endogenously produced octanoic acid from octanoyl-acyl-carrier-protein onto the lipoyl domains of lipoate-dependent enzymes. Lipoyl-ACP can also act as a substrate although octanoyl-ACP is likely to be the physiological substrate. The polypeptide is Octanoyltransferase (Ectopseudomonas mendocina (strain ymp) (Pseudomonas mendocina)).